Here is a 152-residue protein sequence, read N- to C-terminus: uncharacterized protein (152 aa).

Asparagine 2 is a glycosylation site (N-linked (GlcNAc...) asparagine; by host). The next 3 helical transmembrane spans lie at 5-25, 36-56, and 68-88; these read MILL…MNLW, LNDF…CYIL, and LIIT…QAFI. N-linked (GlcNAc...) asparagine; by host glycosylation is present at asparagine 113.

It is found in the membrane. This is an uncharacterized protein from Acanthamoeba polyphaga mimivirus (APMV).